The sequence spans 419 residues: Chalcone synthase D (419 aa).

Cys-164 is a catalytic residue.

Belongs to the thiolase-like superfamily. Chalcone/stilbene synthases family.

It catalyses the reaction (E)-4-coumaroyl-CoA + 3 malonyl-CoA + 3 H(+) = 2',4,4',6'-tetrahydroxychalcone + 3 CO2 + 4 CoA. It participates in secondary metabolite biosynthesis; flavonoid biosynthesis. Its function is as follows. The primary product of this enzyme is 4,2',4',6'-tetrahydroxychalcone (also termed naringenin-chalcone or chalcone) which can under specific conditions spontaneously isomerize into naringenin. In Petunia hybrida (Petunia), this protein is Chalcone synthase D (CHSD).